Here is a 32-residue protein sequence, read N- to C-terminus: Cyclotide glopa B (32 aa).

Residues 1 to 32 constitute a cross-link (cyclopeptide (Gly-Asn)); sequence GGSVPCIETCVWTGCFLVPGCSCKSDKKCYLN. 3 cysteine pairs are disulfide-bonded: cysteine 6/cysteine 21, cysteine 10/cysteine 23, and cysteine 15/cysteine 29.

This is a cyclic peptide.

Functionally, probably participates in a plant defense mechanism. This Gloeospermum pauciflorum protein is Cyclotide glopa B.